The primary structure comprises 283 residues: Large ribosomal subunit protein uL2c (283 aa).

The tract at residues 229–274 is disordered; it reads GVVMNPIDHPHGGGEGKVPIGRKKPLTPWGHPALGRKSRKRRKYSD. Over residues 262-271 the composition is skewed to basic residues; that stretch reads LGRKSRKRRK.

It belongs to the universal ribosomal protein uL2 family. In terms of assembly, part of the 50S ribosomal subunit.

Its subcellular location is the plastid. This chain is Large ribosomal subunit protein uL2c (rpl2), found in Aneura mirabilis (Parasitic liverwort).